Here is an 89-residue protein sequence, read N- to C-terminus: MALSPEKKNEIIENFKTHEGDTGSPEVQIALLTERINQLTMHLKSFKKDHHSRRGLLKMVGQRRALLNYLRDRNFDRYRTILEKLGLRK.

Residues 1-21 are compositionally biased toward basic and acidic residues; it reads MALSPEKKNEIIENFKTHEGD. The interval 1-23 is disordered; that stretch reads MALSPEKKNEIIENFKTHEGDTG.

The protein belongs to the universal ribosomal protein uS15 family. As to quaternary structure, part of the 30S ribosomal subunit. Forms a bridge to the 50S subunit in the 70S ribosome, contacting the 23S rRNA.

Functionally, one of the primary rRNA binding proteins, it binds directly to 16S rRNA where it helps nucleate assembly of the platform of the 30S subunit by binding and bridging several RNA helices of the 16S rRNA. In terms of biological role, forms an intersubunit bridge (bridge B4) with the 23S rRNA of the 50S subunit in the ribosome. The polypeptide is Small ribosomal subunit protein uS15 (Desulforamulus reducens (strain ATCC BAA-1160 / DSM 100696 / MI-1) (Desulfotomaculum reducens)).